A 427-amino-acid chain; its full sequence is Trigger factor (427 aa).

In terms of domain architecture, PPIase FKBP-type spans 163-248 (GDTVVIDFVG…IHEVKAKEVP (86 aa)).

Belongs to the FKBP-type PPIase family. Tig subfamily.

It is found in the cytoplasm. It catalyses the reaction [protein]-peptidylproline (omega=180) = [protein]-peptidylproline (omega=0). Involved in protein export. Acts as a chaperone by maintaining the newly synthesized protein in an open conformation. Functions as a peptidyl-prolyl cis-trans isomerase. The polypeptide is Trigger factor (Streptococcus mutans serotype c (strain ATCC 700610 / UA159)).